The chain runs to 747 residues: AMP deaminase 1 (747 aa).

At T81 the chain carries Phosphothreonine. Residue S85 is modified to Phosphoserine. Y216 is subject to Phosphotyrosine. Residues H303 and H305 each coordinate Zn(2+). Residues H305 and 374–379 (KFNDKY) contribute to the substrate site. S441 bears the Phosphoserine mark. Position 572 (H572) interacts with Zn(2+). E575 contributes to the substrate binding site. Residue H594 is the Proton acceptor of the active site. D649 is a Zn(2+) binding site. Residue 650-653 (DPMQ) coordinates substrate.

It belongs to the metallo-dependent hydrolases superfamily. Adenosine and AMP deaminases family. In terms of assembly, homotetramer. Requires Zn(2+) as cofactor.

It catalyses the reaction AMP + H2O + H(+) = IMP + NH4(+). Its pathway is purine metabolism; IMP biosynthesis via salvage pathway; IMP from AMP: step 1/1. AMP deaminase plays a critical role in energy metabolism. This chain is AMP deaminase 1, found in Homo sapiens (Human).